We begin with the raw amino-acid sequence, 478 residues long: tRNA (guanine-N(7)-)-methyltransferase non-catalytic subunit TRM82 (478 aa).

4 WD repeats span residues 14–53, 73–113, 217–258, and 263–301; these read SSAD…VLDP, EQKF…GLQQ, GHVS…HIIE, and GHEE…LNEK.

This sequence belongs to the WD repeat TRM82 family. Forms a heterodimer with the catalytic subunit TRM8.

It localises to the nucleus. It functions in the pathway tRNA modification; N(7)-methylguanine-tRNA biosynthesis. Required for the formation of N(7)-methylguanine at position 46 (m7G46) in tRNA. In the complex, it is required to stabilize and induce conformational changes of the catalytic subunit. This Phaeosphaeria nodorum (strain SN15 / ATCC MYA-4574 / FGSC 10173) (Glume blotch fungus) protein is tRNA (guanine-N(7)-)-methyltransferase non-catalytic subunit TRM82.